Reading from the N-terminus, the 396-residue chain is Cyclic GMP-AMP synthase-like receptor (396 aa).

ATP contacts are provided by residues S63 and 75-77 (EFD). Mg(2+)-binding residues include E75, D77, and D194. Residue D194 participates in GTP binding. Residues 241–244 (QEQE), K262, and 275–279 (SYYLK) each bind ATP. Residues V286, E287, and D292 each coordinate Mn(2+). The segment at 376–396 (IMNGGNPQQSANAENGSCLSM) is disordered. The span at 380 to 396 (GNPQQSANAENGSCLSM) shows a compositional bias: polar residues.

The protein belongs to the mab-21 family. Mg(2+) serves as cofactor. The cofactor is Mn(2+).

The catalysed reaction is GTP + ATP = 2',3'-cGAMP + 2 diphosphate. It catalyses the reaction GTP + ATP = pppGp(2'-5')A + diphosphate. It carries out the reaction pppGp(2'-5')A = 2',3'-cGAMP + diphosphate. Its function is as follows. Nucleotidyltransferase that catalyzes the formation of cyclic GMP-AMP (2',3'-cGAMP) from ATP and GTP and plays a key role in innate immunity. Acts as a key sensor of double-stranded RNA (dsRNA), the presence of dsRNA in the cytoplasm being a danger signal that triggers the immune responses. Directly binds dsRNA, activating the nucleotidyltransferase activity, leading to synthesis of 2',3'-cGAMP, a second messenger that binds to and activates Sting, thereby triggering the immune response via activation of the NF-kappa-B transcription factor. The protein is Cyclic GMP-AMP synthase-like receptor of Aethina tumida (Small hive beetle).